We begin with the raw amino-acid sequence, 1212 residues long: Peregrin (1212 aa).

The C2H2-type zinc-finger motif lies at 21–47; that stretch reads YECPVETCRKVYKSYSGIEYHLYHYDH. Disordered stretches follow at residues 43-87 and 118-176; these read YHYD…SPGR and VVSE…PKLP. Residues 58–67 are compositionally biased toward basic residues; the sequence is LRKHKKKGRQ. The tract at residues 59-221 is interaction with KAT6A and KAT6B; sequence RKHKKKGRQS…VEYDMDEEDY (163 aa). The segment covering 74 to 85 has biased composition (low complexity); that stretch reads QSPSPSEVSQSP. Residues 119-130 are compositionally biased toward acidic residues; it reads VSEDEEAPEEAP. Ser-120 is modified (phosphoserine). Lys-147 carries the post-translational modification N6-acetyllysine. Positions 148–166 are enriched in basic residues; sequence SGKHKNKEKRKDSNHHHHS. Phosphoserine is present on Ser-237. The PHD-type 1 zinc-finger motif lies at 272-322; it reads DAVCCICNDGECQNSNVILFCDMCNLAVHQECYGVPYIPEGQWLCRRCLQS. The C2HC pre-PHD-type zinc-finger motif lies at 326–359; sequence AVDCALCPNKGGAFKQTDDGRWAHVVCALWIPEV. Residues 383 to 447 form a PHD-type 2 zinc finger; that stretch reads LTCYICKQRG…RKTAYCDIHT (65 aa). The interval 447–489 is disordered; sequence TPPGSARRLPALSHSEGEEEEDEEEDEGKSWSSEKVKKAKAKS. Phosphoserine is present on residues Ser-459 and Ser-461. Over residues 463-473 the composition is skewed to acidic residues; that stretch reads GEEEEDEEEDE. The segment at 500–819 is interaction with MEAF6 and ING5; the sequence is LAEKRAAAPV…IKKEMTALRR (320 aa). The required for RUNX1 and RUNX2 transcriptional activation stretch occupies residues 542–1077; that stretch reads YWTLKRQSRN…RGAGWLSEDE (536 aa). Lys-579 is subject to N6-acetyllysine. Residues 627-731 form the Bromo domain; it reads MQLTPFLILL…EQGGAVLRQA (105 aa). Residues 817-1060 form a disordered region; it reads LRRKLAHQRE…VGTGRGVGHS (244 aa). Basic and acidic residues predominate over residues 823-836; it reads HQRETGRDGPERHG. Position 856 is a phosphothreonine (Thr-856). Low complexity predominate over residues 856–869; it reads TDSAAEESSSQETS. Residues Ser-858, Ser-915, Ser-920, and Ser-924 each carry the phosphoserine modification. The segment covering 993-1019 has biased composition (low complexity); the sequence is PRSSSDSESSSSSSSSAASDRTSTTPS. At Ser-1074 the chain carries Phosphoserine. The PWWP domain maps to 1083–1166; sequence ALDLVWAKCR…RTKLVPLGVN (84 aa). At Ser-1185 the chain carries Phosphoserine.

As to quaternary structure, component of some HBO1 complex composed of KAT7/HBO1, MEAF6, ING5, and BRPF1. Component of the MOZ/MORF complex composed at least of ING5, KAT6A, KAT6B, MEAF6 and one of BRPF1, BRD1/BRPF2 and BRPF3. Interacts (via PHD-type zinc finger domains) with unmethylated histone H3 at 'Lys-4' (H3K4me0). Interacts with trimethylated 'Lys-36' of histone H3 (H3K36me3). Interacts with ING5; interaction directs BRPF1 to H4K4me3-enriched chromatin at the 5' of active genes. Interacts with KAT7. Acetylated by KAT6A. Expressed at low level in most tissues, with high expression in the testis and specific regions of the brain.

Its subcellular location is the nucleus. It localises to the chromosome. The protein resides in the cytoplasm. Its function is as follows. Scaffold subunit of various histone acetyltransferase (HAT) complexes, such as the MOZ/MORF and HBO1 complexes, which have a histone H3 acetyltransferase activity. Plays a key role in HBO1 complex by directing KAT7/HBO1 specificity towards histone H3 'Lys-14' acetylation (H3K14ac). Some HAT complexes preferentially mediate histone H3 'Lys-23' (H3K23ac) acetylation. Positively regulates the transcription of RUNX1 and RUNX2. In Mus musculus (Mouse), this protein is Peregrin.